The following is a 310-amino-acid chain: ADP-L-glycero-D-manno-heptose-6-epimerase (310 aa).

NADP(+)-binding positions include 10-11 (FI), 31-32 (DN), K38, K53, 75-79 (EGACS), and N92. Catalysis depends on Y140, which acts as the Proton acceptor. K144 is a binding site for NADP(+). Residue N169 participates in substrate binding. V170 and K178 together coordinate NADP(+). K178 (proton acceptor) is an active-site residue. Substrate is bound by residues S180, H187, 201–204 (FEGS), and R209. At K267 the chain carries N6-acetyllysine. Substrate is bound at residue Y272.

It belongs to the NAD(P)-dependent epimerase/dehydratase family. HldD subfamily. As to quaternary structure, homopentamer. NADP(+) serves as cofactor. NAD(+) is required as a cofactor.

The catalysed reaction is ADP-D-glycero-beta-D-manno-heptose = ADP-L-glycero-beta-D-manno-heptose. It participates in nucleotide-sugar biosynthesis; ADP-L-glycero-beta-D-manno-heptose biosynthesis; ADP-L-glycero-beta-D-manno-heptose from D-glycero-beta-D-manno-heptose 7-phosphate: step 4/4. Its pathway is bacterial outer membrane biogenesis; LPS core biosynthesis. With respect to regulation, completely inhibited by ADP and ADP-glucose, and partially inhibited by ATP and NADH. Functionally, catalyzes the interconversion between ADP-D-glycero-beta-D-manno-heptose and ADP-L-glycero-beta-D-manno-heptose via an epimerization at carbon 6 of the heptose. This chain is ADP-L-glycero-D-manno-heptose-6-epimerase (hldD), found in Escherichia coli (strain K12).